The sequence spans 500 residues: Lysine--tRNA ligase (500 aa).

The Mg(2+) site is built by glutamate 411 and glutamate 418.

Belongs to the class-II aminoacyl-tRNA synthetase family. Homodimer. It depends on Mg(2+) as a cofactor.

It is found in the cytoplasm. The catalysed reaction is tRNA(Lys) + L-lysine + ATP = L-lysyl-tRNA(Lys) + AMP + diphosphate. The protein is Lysine--tRNA ligase of Azoarcus sp. (strain BH72).